Consider the following 827-residue polypeptide: Periplasmic nitrate reductase (827 aa).

Positions 1–34 form a signal peptide, tat-type signal; the sequence is MSLTRRDFIKANAVPATAAAAGLATPAIAQPAKA. Residues 36-92 enclose the 4Fe-4S Mo/W bis-MGD-type domain; it reads IRWDKGVCRFCGTGCSVLVGVQDGRVVATQGDPDSPVNRGLNCIKGYFLSKIMYGED. Residues Cys43, Cys46, Cys50, and Cys78 each coordinate [4Fe-4S] cluster. Residues Lys80, Gln148, Asn173, Cys177, 210 to 217, 241 to 245, 260 to 262, Met371, Gln375, Asn481, 507 to 508, Lys530, Asp557, and 717 to 726 each bind Mo-bis(molybdopterin guanine dinucleotide); these read WGSNMAEM, STFEH, QTD, SD, and TGRVLEHWHS. Phe793 contributes to the substrate binding site. 2 residues coordinate Mo-bis(molybdopterin guanine dinucleotide): Asn801 and Lys818.

Belongs to the prokaryotic molybdopterin-containing oxidoreductase family. NasA/NapA/NarB subfamily. Component of the periplasmic nitrate reductase NapAB complex composed of NapA and NapB. Requires [4Fe-4S] cluster as cofactor. Mo-bis(molybdopterin guanine dinucleotide) is required as a cofactor. In terms of processing, predicted to be exported by the Tat system. The position of the signal peptide cleavage has not been experimentally proven.

The protein localises to the periplasm. The catalysed reaction is 2 Fe(II)-[cytochrome] + nitrate + 2 H(+) = 2 Fe(III)-[cytochrome] + nitrite + H2O. Functionally, catalytic subunit of the periplasmic nitrate reductase complex NapAB. Receives electrons from NapB and catalyzes the reduction of nitrate to nitrite. The chain is Periplasmic nitrate reductase from Paramagnetospirillum magnetotacticum (Aquaspirillum magnetotacticum).